A 95-amino-acid chain; its full sequence is Large ribosomal subunit protein bL25 (95 aa).

The protein belongs to the bacterial ribosomal protein bL25 family. In terms of assembly, part of the 50S ribosomal subunit; part of the 5S rRNA/L5/L18/L25 subcomplex. Contacts the 5S rRNA. Binds to the 5S rRNA independently of L5 and L18.

In terms of biological role, this is one of the proteins that binds to the 5S RNA in the ribosome where it forms part of the central protuberance. This Haemophilus influenzae (strain PittGG) protein is Large ribosomal subunit protein bL25.